The primary structure comprises 180 residues: MTRKSIAIDMDEVLADTLGEIIDAVNFRADLGIKMEALNGQKLKHVIPEHDGLITEVLREPGFFRHLKVMPYAQEVVKKLTEHYDVYIATAAMDVPTSFSDKYEWLLEFFPFLDPQHFVFCGRKNIVKADYLIDDNPRQLEIFTGTPIMFTAVHNINDDRFERVNSWKDVEQYFLDNIEK.

The active-site Nucleophile is Asp9. Mg(2+) is bound by residues Asp9, Asp11, and Asp135. Asp11 functions as the Proton donor in the catalytic mechanism.

The protein belongs to the 5'(3')-deoxyribonucleotidase family. The cofactor is Mg(2+).

Its function is as follows. Dephosphorylates the 5' and 2'(3')-phosphates of deoxyribonucleotides. The protein is Putative 5'(3')-deoxyribonucleotidase of Staphylococcus aureus (strain MSSA476).